We begin with the raw amino-acid sequence, 203 residues long: UPF0301 protein Sde_3637 (203 aa).

This sequence belongs to the UPF0301 (AlgH) family.

This is UPF0301 protein Sde_3637 from Saccharophagus degradans (strain 2-40 / ATCC 43961 / DSM 17024).